We begin with the raw amino-acid sequence, 341 residues long: Eukaryotic translation initiation factor 3 subunit I (341 aa).

WD repeat units follow at residues 8 to 47, 56 to 95, 151 to 190, 194 to 233, 235 to 274, and 291 to 331; these read GHER…RLGT, GHNG…CLYT, LSGS…EVQA, EHSA…VMKV, TTET…GKFE, and GHFG…RSRP.

The protein belongs to the eIF-3 subunit I family. Component of the eukaryotic translation initiation factor 3 (eIF-3) complex.

It localises to the cytoplasm. In terms of biological role, component of the eukaryotic translation initiation factor 3 (eIF-3) complex, which is involved in protein synthesis of a specialized repertoire of mRNAs and, together with other initiation factors, stimulates binding of mRNA and methionyl-tRNAi to the 40S ribosome. The eIF-3 complex specifically targets and initiates translation of a subset of mRNAs involved in cell proliferation. The chain is Eukaryotic translation initiation factor 3 subunit I from Cryptococcus neoformans var. neoformans serotype D (strain B-3501A) (Filobasidiella neoformans).